The chain runs to 159 residues: uncharacterized protein (159 aa).

The span at 1–13 (MESRPSGRQHASE) shows a compositional bias: basic and acidic residues. A disordered region spans residues 1-35 (MESRPSGRQHASEGDGDQSPTQCAGMRSSGRSDQP).

This is an uncharacterized protein from Homo sapiens (Human).